A 699-amino-acid polypeptide reads, in one-letter code: MAQKHPGEGGLCGAHHSGGASLRTLGPSVDPDILSFSGLRDSAGSAPNGTRCLTEHSSPKYTQPPNPAHWSDPSHGPPRGPGPPLAEEDPDQSEASSEESGVDQELSRENETGYQDDGNSSFLSIPSTCNCQGTPGIPEGPYSEGRDSSSSNFCHHCTSPALGEDEELEGEYDEEEPLKFPSDVSRVPSEKKPAPRRQRHRVPAKEDTREGGRRDPRSPGRHRLGRKRSQADKRRGLGLWGAEELCQLGQAGFWWLIELLVLVGEYVETCGHLIYACRQLKGSDLDLLRVWVGVWAGRLRGWAQVMFQFLSQGFCYGAGLFTRFLRLVGALLLLALALLLGCLQLGWRFLVGLSDRLGWRDKATWIFSWLASPTWQRCLILLRESRPWQQLVRIVQWGWLELPWVKQRTNRQANAPVAGGRYCQPEEEVARLLTMAGVPEDELNPFHVLGVEATASDVELKKAYRQLAVMVHPDKNHHPRAEEAFKVLRAAWDIVSNPERRKEYEMKRMAENELSRSVNEFLSKLQEAMNTMMCSRCQGKHRRFEMDREPKSARYCAECNRLHPAEEGDFWAESSMLGLKITYFALMDGKVYDITEWAGCQRVGISPDTHRVPYHISFGSRMPGTSGRQRATPDAPPADLQDFLSRIFQVPPGQMSNGNFFAAPQPGPGATAASKPNSTVPKGEAKPKRRKKVRRPFQR.

Residues Met-1–Gln-230 are disordered. The segment covering His-75 to Pro-84 has biased composition (pro residues). The span at Ala-86–Val-102 shows a compositional bias: acidic residues. The span at Asp-117–Gly-133 shows a compositional bias: polar residues. Over residues Gly-163–Glu-176 the composition is skewed to acidic residues. A compositionally biased stretch (basic and acidic residues) spans Pro-203–Ser-218. Over residues Pro-219 to Arg-228 the composition is skewed to basic residues. 3 consecutive transmembrane segments (helical) span residues Ala-251–Gly-271, Gly-301–Phe-321, and Leu-327–Trp-347. The J domain maps to Asn-444–Arg-508. The interval Met-655–Arg-699 is disordered. A compositionally biased stretch (low complexity) spans Ala-662 to Ala-673. Residues Pro-687–Arg-699 are compositionally biased toward basic residues.

In terms of assembly, interacts with the FxxxFxxxF motif of DRD1 via its C-terminal domain. Interacts with pestivirus nonstructural protein NS2.

It is found in the endoplasmic reticulum membrane. Regulates the export of target proteins, such as DRD1, from the endoplasmic reticulum to the cell surface. Promotes cleavage of pestivirus polyprotein. This is DnaJ homolog subfamily C member 14 (DNAJC14) from Bos taurus (Bovine).